We begin with the raw amino-acid sequence, 227 residues long: Enolase-phosphatase E1 (227 aa).

Positions 11 and 13 each coordinate Mg(2+). Residues 118-119 (SS) and Lys-161 each bind substrate. Asp-186 is a binding site for Mg(2+).

This sequence belongs to the HAD-like hydrolase superfamily. MasA/MtnC family. As to quaternary structure, monomer. Mg(2+) serves as cofactor.

It localises to the cytoplasm. The protein localises to the nucleus. It catalyses the reaction 5-methylsulfanyl-2,3-dioxopentyl phosphate + H2O = 1,2-dihydroxy-5-(methylsulfanyl)pent-1-en-3-one + phosphate. Its pathway is amino-acid biosynthesis; L-methionine biosynthesis via salvage pathway; L-methionine from S-methyl-5-thio-alpha-D-ribose 1-phosphate: step 3/6. The protein operates within amino-acid biosynthesis; L-methionine biosynthesis via salvage pathway; L-methionine from S-methyl-5-thio-alpha-D-ribose 1-phosphate: step 4/6. Bifunctional enzyme that catalyzes the enolization of 2,3-diketo-5-methylthiopentyl-1-phosphate (DK-MTP-1-P) into the intermediate 2-hydroxy-3-keto-5-methylthiopentenyl-1-phosphate (HK-MTPenyl-1-P), which is then dephosphorylated to form the acireductone 1,2-dihydroxy-3-keto-5-methylthiopentene (DHK-MTPene). The sequence is that of Enolase-phosphatase E1 from Saccharomyces cerevisiae (strain ATCC 204508 / S288c) (Baker's yeast).